A 238-amino-acid polypeptide reads, in one-letter code: tRNA (guanine-N(7)-)-methyltransferase (238 aa).

S-adenosyl-L-methionine-binding residues include E68, E93, D120, and D143. The active site involves D143. Residues K147, D179, and 216-219 (TKFE) contribute to the substrate site.

The protein belongs to the class I-like SAM-binding methyltransferase superfamily. TrmB family.

The catalysed reaction is guanosine(46) in tRNA + S-adenosyl-L-methionine = N(7)-methylguanosine(46) in tRNA + S-adenosyl-L-homocysteine. It functions in the pathway tRNA modification; N(7)-methylguanine-tRNA biosynthesis. In terms of biological role, catalyzes the formation of N(7)-methylguanine at position 46 (m7G46) in tRNA. The sequence is that of tRNA (guanine-N(7)-)-methyltransferase from Marinobacter nauticus (strain ATCC 700491 / DSM 11845 / VT8) (Marinobacter aquaeolei).